A 397-amino-acid chain; its full sequence is CCA-adding enzyme (397 aa).

The ATP site is built by G26 and R29. G26 and R29 together coordinate CTP. Mg(2+) contacts are provided by D39 and D41. Residues R110, D153, R156, R159, and R162 each contribute to the ATP site. Residues R110, D153, R156, R159, and R162 each contribute to the CTP site.

The protein belongs to the tRNA nucleotidyltransferase/poly(A) polymerase family. Bacterial CCA-adding enzyme type 3 subfamily. As to quaternary structure, homodimer. Requires Mg(2+) as cofactor.

It carries out the reaction a tRNA precursor + 2 CTP + ATP = a tRNA with a 3' CCA end + 3 diphosphate. It catalyses the reaction a tRNA with a 3' CCA end + 2 CTP + ATP = a tRNA with a 3' CCACCA end + 3 diphosphate. Its function is as follows. Catalyzes the addition and repair of the essential 3'-terminal CCA sequence in tRNAs without using a nucleic acid template. Adds these three nucleotides in the order of C, C, and A to the tRNA nucleotide-73, using CTP and ATP as substrates and producing inorganic pyrophosphate. tRNA 3'-terminal CCA addition is required both for tRNA processing and repair. Also involved in tRNA surveillance by mediating tandem CCA addition to generate a CCACCA at the 3' terminus of unstable tRNAs. While stable tRNAs receive only 3'-terminal CCA, unstable tRNAs are marked with CCACCA and rapidly degraded. The protein is CCA-adding enzyme of Bacillus cereus (strain AH187).